A 392-amino-acid polypeptide reads, in one-letter code: D-amino-acid oxidase 2 (392 aa).

Serine 10, isoleucine 13, arginine 33, aspartate 34, alanine 45, serine 46, glycine 50, and asparagine 52 together coordinate FAD. Residues phenylalanine 56, tyrosine 245, tyrosine 262, and arginine 311 each contribute to the anthranilate site. (R)-lactate-binding residues include tyrosine 245, tyrosine 262, and arginine 311. Residues arginine 311, glycine 361, serine 362, glycine 364, and glutamine 366 each contribute to the FAD site. Residue serine 362 coordinates anthranilate. Serine 362 contributes to the (R)-lactate binding site. The short motif at 390–392 (AKL) is the Microbody targeting signal element.

This sequence belongs to the DAMOX/DASOX family. It depends on FAD as a cofactor.

The protein resides in the peroxisome matrix. It carries out the reaction a D-alpha-amino acid + O2 + H2O = a 2-oxocarboxylate + H2O2 + NH4(+). The enzyme catalyses D-methionine + O2 + H2O = 4-methylsulfanyl-2-oxobutanoate + H2O2 + NH4(+). The catalysed reaction is D-serine + O2 + H2O = 3-hydroxypyruvate + H2O2 + NH4(+). It catalyses the reaction D-histidine + O2 + H2O = 3-(imidazol-5-yl)pyruvate + H2O2 + NH4(+). It carries out the reaction D-proline + O2 = 1-pyrroline-2-carboxylate + H2O2. The enzyme catalyses D-alanine + O2 + H2O = pyruvate + H2O2 + NH4(+). The catalysed reaction is D-leucine + O2 + H2O = 4-methyl-2-oxopentanoate + H2O2 + NH4(+). It catalyses the reaction D-valine + O2 + H2O = 3-methyl-2-oxobutanoate + H2O2 + NH4(+). Catalyzes the oxidative deamination of D-amino acids with broad substrate specificity. Enables the organism to utilize D-amino acids as a source of nutrients. Enables the organism to utilize D-alanine, D-cysteine, D-histidine, D-leucine, D-methionine, D-phenylalanine, D-proline, D-serine, D-threonine, D-aspartate and D-valine as a nitrogen source and may also contribute to utlization of D-tryptophan, D-tyrosine and D-asparagine as a nitrogen source. Protects the organism from the toxicity of D-amino acids, including from D-alanine. May play a role in its interaction with the host. The chain is D-amino-acid oxidase 2 from Cryptococcus deuterogattii (strain R265) (Cryptococcus gattii VGII (strain R265)).